Reading from the N-terminus, the 614-residue chain is Heat shock protein SSB1 (614 aa).

The tract at residues 1–392 (MSTEVYDGAI…ILSGKATSAE (392 aa)) is nucleotide binding domain (NBD). ATP is bound by residues 16–18 (TTY), Lys-74, 206–208 (GGT), 272–279 (ERAKRTLS), and Gly-343. Residues 393 to 403 (TADLLLLDVVP) are inter-domain linker. Residues 404–614 (LSLGVAMEGN…RAVTKAMSSR (211 aa)) form a substrate binding domain (SBD) region. Residues 517–613 (TSEIENMISE…KRAVTKAMSS (97 aa)) are lid domain (SBDalpha). The short motif at 575–583 (IENTMSEAM) is the Nuclear export signal element.

This sequence belongs to the heat shock protein 70 family. As to quaternary structure, interacts with HAT1 in starvation conditions.

It localises to the nucleus. The protein resides in the cytoplasm. It catalyses the reaction ATP + H2O = ADP + phosphate + H(+). Its function is as follows. Chaperone that interacts with the histone acetyltransferase HAT1 and mediates its translocation from the nucleus to the cytoplasm during germination and starvation conditions. Within the cytoplasm, HAT1 regulates autophagy via acetylation of the autophagy-related proteins ATG3 and ATG9. The chain is Heat shock protein SSB1 from Pyricularia oryzae (strain 70-15 / ATCC MYA-4617 / FGSC 8958) (Rice blast fungus).